Here is a 167-residue protein sequence, read N- to C-terminus: Leptin (167 aa).

The N-terminal stretch at 1–21 (MRCGPLCRFLWLWPYLSCVEA) is a signal peptide. Cys-117 and Cys-167 are joined by a disulfide.

Belongs to the leptin family.

The protein localises to the secreted. Its function is as follows. Key player in the regulation of energy balance and body weight control. Once released into the circulation, has central and peripheral effects by binding LEPR, found in many tissues, which results in the activation of several major signaling pathways. In the hypothalamus, acts as an appetite-regulating factor that induces a decrease in food intake and an increase in energy consumption by inducing anorexinogenic factors and suppressing orexigenic neuropeptides, also regulates bone mass and secretion of hypothalamo-pituitary-adrenal hormones. In the periphery, increases basal metabolism, influences reproductive function, regulates pancreatic beta-cell function and insulin secretion, is pro-angiogenic for endothelial cell and affects innate and adaptive immunity. In the arcuate nucleus of the hypothalamus, activates by depolarization POMC neurons inducing FOS and SOCS3 expression to release anorexigenic peptides and inhibits by hyperpolarization NPY neurons inducing SOCS3 with a consequent reduction on release of orexigenic peptides. In addition to its known satiety inducing effect, has a modulatory role in nutrient absorption. In the intestine, reduces glucose absorption by enterocytes by activating PKC and leading to a sequential activation of p38, PI3K and ERK signaling pathways which exerts an inhibitory effect on glucose absorption. Acts as a growth factor on certain tissues, through the activation of different signaling pathways increases expression of genes involved in cell cycle regulation such as CCND1, via JAK2-STAT3 pathway, or VEGFA, via MAPK1/3 and PI3K-AKT1 pathways. May also play an apoptotic role via JAK2-STAT3 pathway and up-regulation of BIRC5 expression. Pro-angiogenic, has mitogenic activity on vascular endothelial cells and plays a role in matrix remodeling by regulating the expression of matrix metalloproteinases (MMPs) and tissue inhibitors of metalloproteinases (TIMPs). In innate immunity, modulates the activity and function of neutrophils by increasing chemotaxis and the secretion of oxygen radicals. Increases phagocytosis by macrophages and enhances secretion of pro-inflammatory mediators. Increases cytotoxic ability of NK cells. Plays a pro-inflammatory role, in synergy with IL1B, by inducing NOS2 which promotes the production of IL6, IL8 and Prostaglandin E2, through a signaling pathway that involves JAK2, PI3K, MAP2K1/MEK1 and MAPK14/p38. In adaptive immunity, promotes the switch of memory T-cells towards T helper-1 cell immune responses. Increases CD4(+)CD25(-) T-cell proliferation and reduces autophagy during TCR (T-cell receptor) stimulation, through MTOR signaling pathway activation and BCL2 up-regulation. In Canis lupus familiaris (Dog), this protein is Leptin (LEP).